We begin with the raw amino-acid sequence, 313 residues long: tRNA(Ile)-lysidine synthase (313 aa).

37-42 serves as a coordination point for ATP; the sequence is SGGPDS.

The protein belongs to the tRNA(Ile)-lysidine synthase family.

Its subcellular location is the cytoplasm. It catalyses the reaction cytidine(34) in tRNA(Ile2) + L-lysine + ATP = lysidine(34) in tRNA(Ile2) + AMP + diphosphate + H(+). Its function is as follows. Ligates lysine onto the cytidine present at position 34 of the AUA codon-specific tRNA(Ile) that contains the anticodon CAU, in an ATP-dependent manner. Cytidine is converted to lysidine, thus changing the amino acid specificity of the tRNA from methionine to isoleucine. This chain is tRNA(Ile)-lysidine synthase, found in Corynebacterium efficiens (strain DSM 44549 / YS-314 / AJ 12310 / JCM 11189 / NBRC 100395).